The chain runs to 140 residues: Large ribosomal subunit protein bL17 (140 aa).

Residues E120–A140 are disordered.

The protein belongs to the bacterial ribosomal protein bL17 family. As to quaternary structure, part of the 50S ribosomal subunit. Contacts protein L32.

This chain is Large ribosomal subunit protein bL17, found in Erythrobacter litoralis (strain HTCC2594).